Reading from the N-terminus, the 51-residue chain is Cyclic phosphodiesterase (51 aa).

The active-site Proton donor/acceptor is the histidine 11. Threonine 13 is a binding site for substrate. Histidine 38 serves as the catalytic Proton donor/acceptor. 2 residues coordinate substrate: serine 40 and tyrosine 43.

Belongs to the 2H phosphoesterase superfamily. CPD1 family.

Its function is as follows. Hydrolyzes ADP-ribose 1'',2''-cyclic phosphate (Appr&gt;1) that is produced during tRNA splicing into ADP-ribose 1''-phosphate (Appr-1''p). This Triticum aestivum (Wheat) protein is Cyclic phosphodiesterase.